The sequence spans 1023 residues: Probable histidine kinase 3 (1023 aa).

Residues 1 to 80 lie on the Cytoplasmic side of the membrane; that stretch reads MDEMSCGGGG…RGWRVVRETW (80 aa). A helical membrane pass occupies residues 81–101; that stretch reads WWVLLLWILAGSLGSFYLFLF. Residues 102–387 lie on the Extracellular side of the membrane; the sequence is MNAQSLDKRR…CRFEKKPPWP (286 aa). The 202-residue stretch at 151-352 folds into the CHASE domain; it reads TPSAIDQMTF…TNESPISMYG (202 aa). A helical membrane pass occupies residues 388-408; the sequence is WLAITSSFGTLVIALLTGHIF. Residues 409 to 1023 are Cytoplasmic-facing; that stretch reads QATVHRIAKV…RFFQNHDQVE (615 aa). Residues 445-715 enclose the Histidine kinase domain; that stretch reads TVSHEIRTPM…TFTFTAVLMR (271 aa). Phosphohistidine; by autocatalysis is present on His-448. Response regulatory domains follow at residues 732 to 854 and 880 to 1016; these read NALV…RRAL and QIIV…ARFF. 4-aspartylphosphate is present on Asp-783. The interval 812 to 831 is disordered; sequence LFLLGSSASSPKGGSDTSRE. The span at 817 to 827 shows a compositional bias: polar residues; the sequence is SSASSPKGGSD. A 4-aspartylphosphate modification is found at Asp-930.

Activation probably requires a transfer of a phosphate group between a His in the transmitter domain and an Asp of the receiver domain.

It localises to the cell membrane. It catalyses the reaction ATP + protein L-histidine = ADP + protein N-phospho-L-histidine.. In terms of biological role, cytokinin receptor related to bacterial two-component regulators. Functions as a histidine kinase and transmits the stress signal to a downstream MAPK cascade. The chain is Probable histidine kinase 3 from Oryza sativa subsp. indica (Rice).